The following is a 111-amino-acid chain: Phosphoribosyl-ATP pyrophosphatase (111 aa).

This sequence belongs to the PRA-PH family.

It localises to the cytoplasm. It catalyses the reaction 1-(5-phospho-beta-D-ribosyl)-ATP + H2O = 1-(5-phospho-beta-D-ribosyl)-5'-AMP + diphosphate + H(+). It participates in amino-acid biosynthesis; L-histidine biosynthesis; L-histidine from 5-phospho-alpha-D-ribose 1-diphosphate: step 2/9. This chain is Phosphoribosyl-ATP pyrophosphatase, found in Pseudomonas paraeruginosa (strain DSM 24068 / PA7) (Pseudomonas aeruginosa (strain PA7)).